A 508-amino-acid chain; its full sequence is Mu-like prophage FluMu protein gp28 (508 aa).

This sequence to phage Mu protein gp28.

The sequence is that of Mu-like prophage FluMu protein gp28 from Haemophilus influenzae (strain ATCC 51907 / DSM 11121 / KW20 / Rd).